The sequence spans 374 residues: Chaperone protein DnaJ (374 aa).

Residues aspartate 5–glycine 71 form the J domain. Residues glycine 132–threonine 210 form a CR-type zinc finger. Zn(2+) contacts are provided by cysteine 145, cysteine 148, cysteine 162, cysteine 165, cysteine 184, cysteine 187, cysteine 198, and cysteine 201. 4 CXXCXGXG motif repeats span residues cysteine 145–glycine 152, cysteine 162–glycine 169, cysteine 184–glycine 191, and cysteine 198–glycine 205.

Belongs to the DnaJ family. Homodimer. It depends on Zn(2+) as a cofactor.

The protein localises to the cytoplasm. Functionally, participates actively in the response to hyperosmotic and heat shock by preventing the aggregation of stress-denatured proteins and by disaggregating proteins, also in an autonomous, DnaK-independent fashion. Unfolded proteins bind initially to DnaJ; upon interaction with the DnaJ-bound protein, DnaK hydrolyzes its bound ATP, resulting in the formation of a stable complex. GrpE releases ADP from DnaK; ATP binding to DnaK triggers the release of the substrate protein, thus completing the reaction cycle. Several rounds of ATP-dependent interactions between DnaJ, DnaK and GrpE are required for fully efficient folding. Also involved, together with DnaK and GrpE, in the DNA replication of plasmids through activation of initiation proteins. The sequence is that of Chaperone protein DnaJ from Dichelobacter nodosus (strain VCS1703A).